Here is a 297-residue protein sequence, read N- to C-terminus: Protoheme IX farnesyltransferase 1 (297 aa).

A run of 9 helical transmembrane segments spans residues 23–43 (VVVLMLITSLAGMFLATRAGV), 45–65 (WSVLLFGNLGIGLCAGGAAVV), 93–113 (LPALLFALALALLGMVLLLVF), 117–137 (LTAWLTLASLLGYAVLYTGFL), 145–165 (IVIGGLAGAAPPLLGWVAVSG), 171–191 (PLLLVLIIFAWTPPHFWALAI), 216–236 (LHILLYTLILLAVSLLPYAIH), 241–261 (LYLACALGLGLRFLHWAWVLY), and 277–297 (IGYLFALFIALLLDHYLLLSL).

This sequence belongs to the UbiA prenyltransferase family. Protoheme IX farnesyltransferase subfamily.

It is found in the cell inner membrane. The catalysed reaction is heme b + (2E,6E)-farnesyl diphosphate + H2O = Fe(II)-heme o + diphosphate. Its pathway is porphyrin-containing compound metabolism; heme O biosynthesis; heme O from protoheme: step 1/1. In terms of biological role, converts heme B (protoheme IX) to heme O by substitution of the vinyl group on carbon 2 of heme B porphyrin ring with a hydroxyethyl farnesyl side group. This is Protoheme IX farnesyltransferase 1 from Pseudomonas putida (strain ATCC 700007 / DSM 6899 / JCM 31910 / BCRC 17059 / LMG 24140 / F1).